The sequence spans 147 residues: MVHFTAEEKVAITSLWSKMNVEEAGGEALGRLLVVYPWTQRFFDNFGNLSSPSAILGNPKVKAHGKKVLTSFGDAIKNMDNLKTTFAKLSELHCDKLHVDPENFRLLGNVMVIILATHFGKEFTPEVQAAWQKLVSAVAIALGHKYH.

Positions 3-147 (HFTAEEKVAI…VAIALGHKYH (145 aa)) constitute a Globin domain. A phosphoserine mark is found at Ser14 and Ser51. Heme b contacts are provided by His64 and His93.

Belongs to the globin family. In terms of assembly, heterotetramer of two alpha chains and two epsilon chains in early embryonic hemoglobin Gower-2; two zeta chains and two epsilon chains in early embryonic hemoglobin Gower-1. As to expression, red blood cells.

In terms of biological role, the epsilon chain is a beta-type chain of early mammalian embryonic hemoglobin. The chain is Hemoglobin subunit epsilon (HBE1) from Cebus kaapori (Ka'apor capuchin).